The primary structure comprises 148 residues: Large ribosomal subunit protein bL9 (148 aa).

It belongs to the bacterial ribosomal protein bL9 family.

In terms of biological role, binds to the 23S rRNA. This is Large ribosomal subunit protein bL9 from Thermus thermophilus.